Reading from the N-terminus, the 565-residue chain is Oxygen-dependent choline dehydrogenase (565 aa).

6-35 lines the FAD pocket; that stretch reads DYIIVGAGSAGNTLATRLTEDAGVTVLLLE. The interval 182 to 201 is disordered; that stretch reads QQEGFGPMDRTVTKNGRRSS. The active-site Proton acceptor is histidine 475.

The protein belongs to the GMC oxidoreductase family. It depends on FAD as a cofactor.

It catalyses the reaction choline + A = betaine aldehyde + AH2. The catalysed reaction is betaine aldehyde + NAD(+) + H2O = glycine betaine + NADH + 2 H(+). It participates in amine and polyamine biosynthesis; betaine biosynthesis via choline pathway; betaine aldehyde from choline (cytochrome c reductase route): step 1/1. Functionally, involved in the biosynthesis of the osmoprotectant glycine betaine. Catalyzes the oxidation of choline to betaine aldehyde and betaine aldehyde to glycine betaine at the same rate. This chain is Oxygen-dependent choline dehydrogenase, found in Pseudomonas putida (strain ATCC 47054 / DSM 6125 / CFBP 8728 / NCIMB 11950 / KT2440).